A 318-amino-acid polypeptide reads, in one-letter code: 3'-5' exoribonuclease YhaM (318 aa).

Positions 163–279 (HVVSMLDLAK…LHYIDNLDAK (117 aa)) constitute an HD domain.

The protein belongs to the YhaM family.

Its function is as follows. Shows a 3'-5' exoribonuclease activity. This is 3'-5' exoribonuclease YhaM from Bacillus cytotoxicus (strain DSM 22905 / CIP 110041 / 391-98 / NVH 391-98).